Reading from the N-terminus, the 450-residue chain is Zinc finger protein 446 (450 aa).

The region spanning 26 to 108 is the SCAN box domain; it reads RLRFRGFCYQ…ALVEGLQHDP (83 aa). Lys130 participates in a covalent cross-link: Glycyl lysine isopeptide (Lys-Gly) (interchain with G-Cter in SUMO2). Disordered regions lie at residues 130–155 and 168–205; these read KTEEPLGSPHPSGTVESPGEGPQDTR and EEPNVDGQEVAPSSPPLAAQSPEGNHGHQEPASTSFHP. Phosphoserine is present on Ser137. In terms of domain architecture, KRAB spans 208-254; the sequence is IQEEWGLLDRSQKELYWDAMLEKYGTVVSLGLPPHQPEAQAQSELGM. A Phosphoserine modification is found at Ser218. Disordered stretches follow at residues 263 to 331 and 354 to 389; these read RSLR…PRKP and HTSGPGVQSPGLATGESTEKPPQGEVAFPHHPRRSL. The segment covering 275–286 has biased composition (pro residues); sequence PGCPEAQPPQGP. The segment covering 287–306 has biased composition (low complexity); sequence GPAAWEGLSGAATPAPTVRP. Residue Thr308 is modified to Phosphothreonine. Residue Lys330 forms a Glycyl lysine isopeptide (Lys-Gly) (interchain with G-Cter in SUMO2) linkage. 3 consecutive C2H2-type zinc fingers follow at residues 332 to 359, 395 to 422, and 423 to 450; these read YTCEQCGRGFDWKSVFVIHHRTHTSGPG, YPCEECGCSFSWKSQLVIHRKSHTGQRR, and HFCSDCGRAFDWKSQLVIHRKGHRPEVP.

The protein belongs to the krueppel C2H2-type zinc-finger protein family.

Its subcellular location is the nucleus. May be involved in transcriptional regulation. The sequence is that of Zinc finger protein 446 (ZNF446) from Homo sapiens (Human).